An 84-amino-acid polypeptide reads, in one-letter code: Three-finger toxin MALT0070C (84 aa).

A signal peptide spans 1-21; it reads MKTLLLTLVVVTIVCLDLGYT. 4 disulfide bridges follow: Cys-24-Cys-43, Cys-36-Cys-60, Cys-64-Cys-71, and Cys-72-Cys-77.

The protein belongs to the three-finger toxin family. Short-chain subfamily. In terms of tissue distribution, expressed by the venom gland.

The protein localises to the secreted. The polypeptide is Three-finger toxin MALT0070C (Micrurus altirostris (Uruguayan coral snake)).